A 556-amino-acid chain; its full sequence is Formate--tetrahydrofolate ligase 1 (556 aa).

Thr-65–Ser-72 provides a ligand contact to ATP.

Belongs to the formate--tetrahydrofolate ligase family.

It carries out the reaction (6S)-5,6,7,8-tetrahydrofolate + formate + ATP = (6R)-10-formyltetrahydrofolate + ADP + phosphate. Its pathway is one-carbon metabolism; tetrahydrofolate interconversion. The sequence is that of Formate--tetrahydrofolate ligase 1 from Streptococcus pyogenes serotype M18 (strain MGAS8232).